A 195-amino-acid chain; its full sequence is Orotate phosphoribosyltransferase (195 aa).

Residues Arg87, Lys91, and 112-120 (DDVATTGGS) each bind 5-phospho-alpha-D-ribose 1-diphosphate. 2 residues coordinate orotate: Thr116 and Arg144.

The protein belongs to the purine/pyrimidine phosphoribosyltransferase family. PyrE subfamily. In terms of assembly, homodimer. The cofactor is Mg(2+).

The catalysed reaction is orotidine 5'-phosphate + diphosphate = orotate + 5-phospho-alpha-D-ribose 1-diphosphate. Its pathway is pyrimidine metabolism; UMP biosynthesis via de novo pathway; UMP from orotate: step 1/2. Functionally, catalyzes the transfer of a ribosyl phosphate group from 5-phosphoribose 1-diphosphate to orotate, leading to the formation of orotidine monophosphate (OMP). This chain is Orotate phosphoribosyltransferase, found in Sulfurisphaera tokodaii (strain DSM 16993 / JCM 10545 / NBRC 100140 / 7) (Sulfolobus tokodaii).